Here is a 494-residue protein sequence, read N- to C-terminus: Apolipoprotein N-acyltransferase (494 aa).

A run of 6 helical transmembrane segments spans residues 16–36, 41–61, 62–82, 133–153, 173–193, and 202–222; these read TVGG…FIWI, LWAS…AILL, SYRW…IAFS, LIWG…FGLG, GGLA…IFAF, and LFAL…ILLA. One can recognise a CN hydrolase domain in the interval 235–461; the sequence is WQTNIPTRQK…EGVGVIDINV (227 aa). E276 serves as the catalytic Proton acceptor. K325 is a catalytic residue. C373 serves as the catalytic Nucleophile. Residues 468–488 traverse the membrane as a helical segment; sequence YVRWGEIPLISSLLIVLCFIA.

It belongs to the CN hydrolase family. Apolipoprotein N-acyltransferase subfamily.

The protein localises to the cell inner membrane. It carries out the reaction N-terminal S-1,2-diacyl-sn-glyceryl-L-cysteinyl-[lipoprotein] + a glycerophospholipid = N-acyl-S-1,2-diacyl-sn-glyceryl-L-cysteinyl-[lipoprotein] + a 2-acyl-sn-glycero-3-phospholipid + H(+). The protein operates within protein modification; lipoprotein biosynthesis (N-acyl transfer). Its function is as follows. Catalyzes the phospholipid dependent N-acylation of the N-terminal cysteine of apolipoprotein, the last step in lipoprotein maturation. In Prochlorococcus marinus (strain SARG / CCMP1375 / SS120), this protein is Apolipoprotein N-acyltransferase.